We begin with the raw amino-acid sequence, 130 residues long: Snaclec B8 (130 aa).

Intrachain disulfides connect Cys2–Cys13, Cys30–Cys124, and Cys99–Cys116. One can recognise a C-type lectin domain in the interval 9 to 125 (HEGHCYKVFK…CELAYHFICM (117 aa)).

Belongs to the snaclec family. In terms of assembly, heterodimer; disulfide-linked. Expressed by the venom gland.

The protein resides in the secreted. In terms of biological role, interferes with one step of hemostasis (modulation of platelet aggregation, or coagulation cascade, for example). In Macrovipera lebetinus (Levantine viper), this protein is Snaclec B8.